We begin with the raw amino-acid sequence, 428 residues long: Tryptophan synthase beta chain (428 aa).

Lys100 is modified (N6-(pyridoxal phosphate)lysine).

This sequence belongs to the TrpB family. Tetramer of two alpha and two beta chains. Pyridoxal 5'-phosphate serves as cofactor.

The catalysed reaction is (1S,2R)-1-C-(indol-3-yl)glycerol 3-phosphate + L-serine = D-glyceraldehyde 3-phosphate + L-tryptophan + H2O. It functions in the pathway amino-acid biosynthesis; L-tryptophan biosynthesis; L-tryptophan from chorismate: step 5/5. Its function is as follows. The beta subunit is responsible for the synthesis of L-tryptophan from indole and L-serine. This chain is Tryptophan synthase beta chain, found in Streptomyces griseus subsp. griseus (strain JCM 4626 / CBS 651.72 / NBRC 13350 / KCC S-0626 / ISP 5235).